The primary structure comprises 123 residues: Small ribosomal subunit protein bS6 (123 aa).

Residues 102 to 123 are disordered; that stretch reads MLKQKEERAPRREAEAKEFAAE. Positions 104 to 123 are enriched in basic and acidic residues; it reads KQKEERAPRREAEAKEFAAE.

It belongs to the bacterial ribosomal protein bS6 family.

Functionally, binds together with bS18 to 16S ribosomal RNA. This chain is Small ribosomal subunit protein bS6, found in Vibrio vulnificus (strain CMCP6).